Consider the following 308-residue polypeptide: Elongation factor Ts (308 aa).

The segment at threonine 80–valine 83 is involved in Mg(2+) ion dislocation from EF-Tu.

Belongs to the EF-Ts family.

The protein resides in the cytoplasm. Functionally, associates with the EF-Tu.GDP complex and induces the exchange of GDP to GTP. It remains bound to the aminoacyl-tRNA.EF-Tu.GTP complex up to the GTP hydrolysis stage on the ribosome. This Rhizobium johnstonii (strain DSM 114642 / LMG 32736 / 3841) (Rhizobium leguminosarum bv. viciae) protein is Elongation factor Ts.